We begin with the raw amino-acid sequence, 183 residues long: Putative 3-methyladenine DNA glycosylase (183 aa).

The protein belongs to the DNA glycosylase MPG family.

The polypeptide is Putative 3-methyladenine DNA glycosylase (Legionella pneumophila (strain Lens)).